Consider the following 272-residue polypeptide: MFHMLKIRLIPCIVTKGELVVQSFAFKNYLPIGNVKTAIDFFVNWDVDEIIVNDIDASKEFREPNVDLVSWAAKECFVPLTVGGGIKTLEHIRNLLKAGADKVTINTKAIDDPDFIKNAASVFGSQCITVSVDAIKQGNVYKLYDYRDGRVLDVDVVDWVRKVESYGAGEILLNSVDRDGSREGYDVELLKTVSGIVSIPVIALGGIGRFDQLAEGAIEGGCQALSAANIFQHMEHSTIAAKAQMRNAKLNVRLSSKVKYENFDLDFLGRPY.

Residue Asp-133 is part of the active site.

The protein belongs to the HisA/HisF family. Heterodimer of HisH and HisF.

It localises to the cytoplasm. The catalysed reaction is 5-[(5-phospho-1-deoxy-D-ribulos-1-ylimino)methylamino]-1-(5-phospho-beta-D-ribosyl)imidazole-4-carboxamide + L-glutamine = D-erythro-1-(imidazol-4-yl)glycerol 3-phosphate + 5-amino-1-(5-phospho-beta-D-ribosyl)imidazole-4-carboxamide + L-glutamate + H(+). It participates in amino-acid biosynthesis; L-histidine biosynthesis; L-histidine from 5-phospho-alpha-D-ribose 1-diphosphate: step 5/9. Its function is as follows. IGPS catalyzes the conversion of PRFAR and glutamine to IGP, AICAR and glutamate. The HisF subunit catalyzes the cyclization activity that produces IGP and AICAR from PRFAR using the ammonia provided by the HisH subunit. The sequence is that of Putative imidazole glycerol phosphate synthase subunit hisF2 (hisF2) from Vibrio vulnificus (strain YJ016).